A 327-amino-acid chain; its full sequence is GTPase Obg (327 aa).

One can recognise an Obg domain in the interval 1 to 159 (MKFLDQVKIY…YVIWLQLKTI (159 aa)). Positions 160–327 (ADVGIVGLPN…IKAKLLSYVS (168 aa)) constitute an OBG-type G domain. GTP is bound by residues 166-173 (GLPNAGKS), 191-195 (FTTLN), 212-215 (DIPG), 279-282 (NKTD), and 308-310 (STL). Ser173 and Thr193 together coordinate Mg(2+).

Belongs to the TRAFAC class OBG-HflX-like GTPase superfamily. OBG GTPase family. As to quaternary structure, monomer. Mg(2+) is required as a cofactor.

The protein resides in the cytoplasm. An essential GTPase which binds GTP, GDP and possibly (p)ppGpp with moderate affinity, with high nucleotide exchange rates and a fairly low GTP hydrolysis rate. Plays a role in control of the cell cycle, stress response, ribosome biogenesis and in those bacteria that undergo differentiation, in morphogenesis control. This chain is GTPase Obg, found in Pelagibacter ubique (strain HTCC1062).